Here is a 259-residue protein sequence, read N- to C-terminus: Sugar fermentation stimulation protein homolog (259 aa).

Belongs to the SfsA family.

This chain is Sugar fermentation stimulation protein homolog, found in Prochlorococcus marinus (strain MIT 9303).